Consider the following 334-residue polypeptide: Procathepsin L (334 aa).

The N-terminal stretch at 1–17 (MNLLLLLAVLCLGTALA) is a signal peptide. Residues 18–113 (TPKFDQTFSA…RLFQEPLMLK (96 aa)) constitute a propeptide, activation peptide. E122 lines the Zn(2+) pocket. 2 cysteine pairs are disulfide-bonded: C135-C178 and C169-C211. C138 is an active-site residue. Residues E163, D184, E199, and E205 each coordinate Zn(2+). N-linked (GlcNAc...) (high mannose) asparagine glycosylation occurs at N221. Positions 227, 250, 253, and 275 each coordinate Zn(2+). Cysteines 269 and 322 form a disulfide. H276 is an active-site residue. A propeptide spanning residues 289–290 (DS) is cleaved from the precursor. Residue N300 is part of the active site.

This sequence belongs to the peptidase C1 family. Dimer of a heavy and a light chain linked by disulfide bonds. Interacts with Long isoform of CD74/Ii chain; the interaction stabilizes the conformation of mature CTSL. In terms of processing, during export along the endocytic pathway, pro-CTSL undergoes several proteolytic cleavages to generate the CTSL single-chain and two-chain mature forms, composed of a heavy chain linked to a light chain by disulfide bonds. Autocleavage; produces the single-chain CTSL after cleavage of the propeptide. The cleavage can be intermolecular. Expressed in thymus, kidney and liver. Expressed in thyroid epithelial cells. Expressed in cortical thymic epithelial cells. Expressed by antigen presenting cells (APCs) such as dendritic cells and macrophages.

It localises to the lysosome. The protein localises to the apical cell membrane. It is found in the secreted. The protein resides in the extracellular space. Its subcellular location is the cytoplasmic vesicle. It localises to the secretory vesicle. The protein localises to the chromaffin granule. It catalyses the reaction Specificity close to that of papain. As compared to cathepsin B, cathepsin L exhibits higher activity toward protein substrates, but has little activity on Z-Arg-Arg-NHMec, and no peptidyl-dipeptidase activity.. Long isoform of CD74/Ii chain stabilizes the conformation of mature CTSL by binding to its active site and serving as a chaperone to help maintain a pool of mature enzyme in endocytic compartments and extracellular space of APCs. IFNG enhances the conversion into the CTSL mature and active form. Inhibited by CST6. Inhibited by the glycopeptide antibiotic teicoplanin. Inhibited by amantadine. Its function is as follows. Thiol protease important for the overall degradation of proteins in lysosomes. Involved in the solubilization of cross-linked TG/thyroglobulin and in the subsequent release of thyroid hormone thyroxine (T4) by limited proteolysis of TG/thyroglobulin in the thyroid follicle lumen. In neuroendocrine chromaffin cells secretory vesicles, catalyzes the prohormone proenkephalin processing to the active enkephalin peptide neurotransmitter. In thymus, regulates CD4(+) T cell positive selection by generating the major histocompatibility complex class II (MHCII) bound peptide ligands presented by cortical thymic epithelial cells. Also mediates invariant chain processing in cortical thymic epithelial cells. Major elastin-degrading enzyme at neutral pH. Accumulates as a mature and active enzyme in the extracellular space of antigen presenting cells (APCs) to regulate degradation of the extracellular matrix in the course of inflammation. Secreted form generates endostatin from COL18A1. Critical for cardiac morphology and function. Plays an important role in hair follicle morphogenesis and cycling, as well as epidermal differentiation. Required for maximal stimulation of steroidogenesis by TIMP1. In Mus musculus (Mouse), this protein is Procathepsin L.